Reading from the N-terminus, the 656-residue chain is ATP-dependent RNA helicase MRH4, mitochondrial (656 aa).

A mitochondrion-targeting transit peptide spans 1-46; the sequence is MTSFSHLSRLRMSAFLPHVCLQCRLKTVSSLPAQSSASSLLQAVRH. The interval 42-125 is disordered; the sequence is QAVRHASSAR…KDKDGSEKKQ (84 aa). Positions 60–71 are enriched in polar residues; sequence MTLSPNVAQSTV. Residues 96-125 show a composition bias toward basic and acidic residues; sequence NLRDRQRPRSQAELKRTSFKKDKDGSEKKQ. The Q motif signature appears at 157–190; that stretch reads TSFDQFDLLPSVRQSVYDSALPGLEYVTPTPIQR. In terms of domain architecture, Helicase ATP-binding spans 210 to 431; the sequence is QEDMPRFDQY…RERFPQIRRL (222 aa). 223-230 contacts ATP; it reads AETGSGKT. The tract at residues 246–270 is disordered; that stretch reads AKDKEEEERMAKEELEKEQEQAKEK. Positions 378-381 match the DEAD box motif; the sequence is DEAD. In terms of domain architecture, Helicase C-terminal spans 480–656; the sequence is DVGYQVTGQK…EAMYRGQALI (177 aa).

This sequence belongs to the DEAD box helicase family. MRH4 subfamily.

The protein resides in the mitochondrion. It carries out the reaction ATP + H2O = ADP + phosphate + H(+). In terms of biological role, ATP-binding RNA helicase involved in mitochondrial RNA metabolism. Required for maintenance of mitochondrial DNA. This is ATP-dependent RNA helicase MRH4, mitochondrial (MRH4) from Coccidioides immitis (strain RS) (Valley fever fungus).